Here is a 276-residue protein sequence, read N- to C-terminus: Bis(5'-nucleosyl)-tetraphosphatase, symmetrical (276 aa).

The protein belongs to the Ap4A hydrolase family.

The enzyme catalyses P(1),P(4)-bis(5'-adenosyl) tetraphosphate + H2O = 2 ADP + 2 H(+). Hydrolyzes diadenosine 5',5'''-P1,P4-tetraphosphate to yield ADP. This is Bis(5'-nucleosyl)-tetraphosphatase, symmetrical from Neisseria gonorrhoeae (strain ATCC 700825 / FA 1090).